The following is a 266-amino-acid chain: Oxidoreductase aflX (266 aa).

The protein belongs to the avfA family.

It functions in the pathway mycotoxin biosynthesis; aflatoxin biosynthesis. In terms of biological role, oxidoreductase; part of the gene cluster that mediates the biosynthesis of aflatoxins, a group of polyketide-derived furanocoumarins, and part of the most toxic and carcinogenic compounds among the known mycotoxins. The four major aflatoxins produced by A.parasiticus are aflatoxin B1 (AFB1), aflatoxin B2 (AFB2), aflatoxin G1 (AFG1) and aflatoxin G2 (AFG2). Within the aflatoxin pathway, the oxidoreductase aflX seems to be involved in the conversion of versicolorin A (VERA) to demethylsterigmatocystin (DMST), through probable epoxide ring-opening step following versicolorin A oxidation required for the formation of the xanthone ring. The biosynthesis of aflatoxins begins with the norsolorinic acid synthase aflC that combines a hexanoyl starter unit produced by the fatty acid synthase aflA/aflB and 7 malonyl-CoA extender units to synthesize the precursor NOR. The second step is the conversion of NOR to averantin and requires the norsolorinic acid ketoreductase aflD, which catalyzes the dehydration of norsolorinic acid to form (1'S)-averantin. The norsolorinic acid reductases aflE and aflF may also play a role in the conversion of NOR to AVN. The cytochrome P450 monooxygenase aflG then catalyzes the hydroxylation of AVN to 5'hydroxyaverantin (HAVN). The next step is performed by the 5'-hydroxyaverantin dehydrogenase aflH that transforms HAVN to 5'-oxoaverantin (OAVN) which is further converted to averufin (AVF) by aflK that plays a dual role in the pathway, as a 5'-oxoaverantin cyclase that mediates conversion of 5'-oxoaverantin, as well as a versicolorin B synthase in a later step in the pathway. The averufin oxidase aflI catalyzes the conversion of AVF to versiconal hemiacetal acetate (VHA). VHA is then the substrate for the versiconal hemiacetal acetate esterase aflJ to yield versiconal (VAL). Versicolorin B synthase aflK then converts VAL to versicolorin B (VERB) by closing the bisfuran ring of aflatoxin which is required for DNA-binding, thus giving to aflatoxin its activity as a mutagen. Then, the activity of the versicolorin B desaturase aflL leads to versicolorin A (VERA). A branch point starts from VERB since it can also be converted to dihydrodemethylsterigmatocystin (DMDHST), probably also by aflL, VERA being a precursor for aflatoxins B1 and G1, and DMDHST for aflatoxins B2 and G2. Next, the versicolorin reductase aflM and the cytochrome P450 monooxygenase aflN are involved in conversion of VERA to demethylsterigmatocystin (DMST). AflX and aflY seem also involved in this step, through probable aflX-mediated epoxide ring-opening step following versicolorin A oxidation and aflY-mediated Baeyer-Villiger oxidation required for the formation of the xanthone ring. The methyltransferase aflO then leads to the modification of DMST to sterigmatocystin (ST), and of DMDHST to dihydrosterigmatocystin (DHST). Both ST and DHST are then substrates of the O-methyltransferase aflP to yield O-methylsterigmatocystin (OMST) and dihydro-O-methylsterigmatocystin (DHOMST), respectively. Finally OMST is converted to aflatoxins B1 and G1, and DHOMST to aflatoxins B2 and G2, via the action of several enzymes including O-methylsterigmatocystin oxidoreductase aflQ, the cytochrome P450 monooxygenase aflU, but also the NADH-dependent flavin oxidoreductase nadA which is specifically required for the synthesis of AFG1. This Aspergillus parasiticus (strain ATCC 56775 / NRRL 5862 / SRRC 143 / SU-1) protein is Oxidoreductase aflX.